The sequence spans 964 residues: Probable outer membrane protein PmpE (964 aa).

Residues 1-18 (MKKAFFFFLIGNSLSGLA) form the signal peptide. Residues 683–964 (LTPSGHPFWG…YLNGEIALRF (282 aa)) enclose the Autotransporter domain.

The protein belongs to the PMP outer membrane protein family.

Its subcellular location is the secreted. It is found in the cell wall. The protein resides in the cell outer membrane. This Chlamydia trachomatis serovar D (strain ATCC VR-885 / DSM 19411 / UW-3/Cx) protein is Probable outer membrane protein PmpE (pmpE).